We begin with the raw amino-acid sequence, 308 residues long: Ornithine carbamoyltransferase (308 aa).

Residues 56–59, Gln83, Arg107, and 134–137 each bind carbamoyl phosphate; these read STRT and HPCQ. L-ornithine contacts are provided by residues Asn165, Asp225, and 229-230; that span reads SM. Carbamoyl phosphate-binding positions include 266–267 and Arg294; that span reads CL.

The protein belongs to the aspartate/ornithine carbamoyltransferase superfamily. OTCase family.

The protein resides in the cytoplasm. The enzyme catalyses carbamoyl phosphate + L-ornithine = L-citrulline + phosphate + H(+). It functions in the pathway amino-acid biosynthesis; L-arginine biosynthesis; L-arginine from L-ornithine and carbamoyl phosphate: step 1/3. Reversibly catalyzes the transfer of the carbamoyl group from carbamoyl phosphate (CP) to the N(epsilon) atom of ornithine (ORN) to produce L-citrulline. The protein is Ornithine carbamoyltransferase of Paracoccus denitrificans (strain Pd 1222).